We begin with the raw amino-acid sequence, 486 residues long: Ribulose bisphosphate carboxylase large chain (486 aa).

Substrate-binding residues include Asn-125 and Thr-175. Residue Lys-177 is the Proton acceptor of the active site. Position 179 (Lys-179) interacts with substrate. Lys-203, Asp-205, and Glu-206 together coordinate Mg(2+). An N6-carboxylysine modification is found at Lys-203. The active-site Proton acceptor is His-295. Residues Arg-296, His-328, and Ser-380 each coordinate substrate.

Belongs to the RuBisCO large chain family. Type I subfamily. As to quaternary structure, heterohexadecamer of 8 large chains and 8 small chains. It depends on Mg(2+) as a cofactor.

It catalyses the reaction 2 (2R)-3-phosphoglycerate + 2 H(+) = D-ribulose 1,5-bisphosphate + CO2 + H2O. The catalysed reaction is D-ribulose 1,5-bisphosphate + O2 = 2-phosphoglycolate + (2R)-3-phosphoglycerate + 2 H(+). In terms of biological role, ruBisCO catalyzes two reactions: the carboxylation of D-ribulose 1,5-bisphosphate, the primary event in carbon dioxide fixation, as well as the oxidative fragmentation of the pentose substrate. Both reactions occur simultaneously and in competition at the same active site. This chain is Ribulose bisphosphate carboxylase large chain, found in Afipia carboxidovorans (strain ATCC 49405 / DSM 1227 / KCTC 32145 / OM5) (Oligotropha carboxidovorans).